Here is a 329-residue protein sequence, read N- to C-terminus: Terpene synthase 7 (329 aa).

Residues 99 to 104 (DDLYLE) carry the DDxx(x)D/E motif motif. The NDxxSxxxD/E motif signature appears at 230–238 (NDIHSFNKE).

This sequence belongs to the terpene synthase family.

Functionally, terpene synthase that converts its substrate farnesyl diphosphate (FPP) into 6 yet unidentified sesquiterpenes. The chain is Terpene synthase 7 from Dictyostelium purpureum (Slime mold).